Here is a 526-residue protein sequence, read N- to C-terminus: Major facilitator superfamily domain-containing protein 4A (526 aa).

The next 12 helical transmembrane spans lie at 21-41 (LTYW…GPTI), 55-75 (ITLV…IGGF), 84-104 (LSSL…IPLC), 107-127 (LLML…IDTI), 142-162 (VFLQ…PLIA), 215-235 (YAFW…FVLV), 297-317 (LSFF…DGIV), 341-361 (GYLT…AIPL), 377-397 (GVIV…FLFI), 401-421 (CLGL…EDIL), 430-450 (VLVT…GSVM), and 458-478 (FLLC…FLYF).

Belongs to the major facilitator superfamily.

It is found in the membrane. The sequence is that of Major facilitator superfamily domain-containing protein 4A (mfsd4a) from Danio rerio (Zebrafish).